The chain runs to 394 residues: Beta-ketothiolase BktB (394 aa).

Residue Cys-90 is the Acyl-thioester intermediate of the active site. Catalysis depends on proton acceptor residues His-350 and Cys-380.

This sequence belongs to the thiolase-like superfamily. Thiolase family.

It catalyses the reaction an acyl-CoA + acetyl-CoA = a 3-oxoacyl-CoA + CoA. The enzyme catalyses 2 acetyl-CoA = acetoacetyl-CoA + CoA. Required for efficient production of poly(beta-hydroxybutyrate-co-beta-hydroxyvalerate) (PHBV). Catalyzes the condensation of acetyl-CoA and propionyl-CoA to form beta-ketovaleryl-CoA, and the condensation of two acetyl-CoA molecules to form acetoacetyl-CoA. This is Beta-ketothiolase BktB (bktB) from Cupriavidus necator (strain ATCC 17699 / DSM 428 / KCTC 22496 / NCIMB 10442 / H16 / Stanier 337) (Ralstonia eutropha).